We begin with the raw amino-acid sequence, 364 residues long: tRNA-specific 2-thiouridylase MnmA 1 (364 aa).

ATP-binding positions include 11-18 (GMSGGTDS) and phenylalanine 37. The active-site Nucleophile is cysteine 96. Cysteine 96 and cysteine 193 form a disulfide bridge. Glycine 120 contacts ATP. The interval 142–144 (KDQ) is interaction with tRNA. Cysteine 193 functions as the Cysteine persulfide intermediate in the catalytic mechanism. The interaction with tRNA stretch occupies residues 309-310 (RY).

Belongs to the MnmA/TRMU family.

The protein localises to the cytoplasm. The enzyme catalyses S-sulfanyl-L-cysteinyl-[protein] + uridine(34) in tRNA + AH2 + ATP = 2-thiouridine(34) in tRNA + L-cysteinyl-[protein] + A + AMP + diphosphate + H(+). Its function is as follows. Catalyzes the 2-thiolation of uridine at the wobble position (U34) of tRNA, leading to the formation of s(2)U34. In Bacteroides fragilis (strain YCH46), this protein is tRNA-specific 2-thiouridylase MnmA 1.